The primary structure comprises 468 residues: GDNF family receptor alpha-1 (468 aa).

A signal peptide spans 1 to 24 (MFLATLYFALPLLDLLMSAEVSGG). Repeat copies occupy residues 25–113 (DRLD…LQGN), 150–238 (KGNN…YEER), and 239–342 (ERPN…KNAI). Residues C36 and C42 are joined by a disulfide bond. N59 is a glycosylation site (N-linked (GlcNAc...) asparagine). Disulfide bonds link C154–C214, C161–C167, C178–C192, C187–C233, C216–C221, C243–C313, C250–C256, C267–C285, C277–C337, and C315–C325. Residues N347 and N406 are each glycosylated (N-linked (GlcNAc...) asparagine). Residue S430 is the site of GPI-anchor amidated serine attachment. Positions 431-468 (HITTKSMAAPPSCSLSSLPVLMLTALAALLSVSLAETS) are cleaved as a propeptide — removed in mature form.

This sequence belongs to the GDNFR family. As to quaternary structure, interacts with GDNF ligand and RET: forms a 2:2:2 ternary complex composed of GDNF ligand, GFRA1 and RET receptor. Interacts with SORL1, either alone or in complex with GDNF. Interaction between SORL1 and GFRA1 leads to GFRA1 internalization, but not degradation. Expressed in liver, brain, kidney and cochlea.

Its subcellular location is the cell membrane. It is found in the golgi apparatus. It localises to the trans-Golgi network. The protein resides in the endosome. The protein localises to the multivesicular body. Coreceptor for GDNF, a neurotrophic factor that enhances survival and morphological differentiation of dopaminergic neurons and increases their high-affinity dopamine uptake. GDNF-binding leads to autophosphorylation and activation of the RET receptor. The sequence is that of GDNF family receptor alpha-1 (Gfra1) from Rattus norvegicus (Rat).